A 287-amino-acid chain; its full sequence is Ribonuclease Z (287 aa).

Positions 64, 66, 68, 69, 124, 191, and 250 each coordinate Zn(2+). Asp68 acts as the Proton acceptor in catalysis.

This sequence belongs to the RNase Z family. Homodimer. Zn(2+) serves as cofactor.

It catalyses the reaction Endonucleolytic cleavage of RNA, removing extra 3' nucleotides from tRNA precursor, generating 3' termini of tRNAs. A 3'-hydroxy group is left at the tRNA terminus and a 5'-phosphoryl group is left at the trailer molecule.. Its function is as follows. Zinc phosphodiesterase, which displays some tRNA 3'-processing endonuclease activity. Probably involved in tRNA maturation, by removing a 3'-trailer from precursor tRNA. In Pyrobaculum arsenaticum (strain DSM 13514 / JCM 11321 / PZ6), this protein is Ribonuclease Z.